The sequence spans 545 residues: Phenylalanine--tRNA ligase beta subunit (545 aa).

The region spanning 268–343 (FLHKIQNVRE…MSIGYNNLEP (76 aa)) is the B5 domain. Mg(2+) contacts are provided by Asp321, Asp327, Glu330, and Asp331.

This sequence belongs to the phenylalanyl-tRNA synthetase beta subunit family. Type 2 subfamily. In terms of assembly, tetramer of two alpha and two beta subunits. Mg(2+) is required as a cofactor.

The protein resides in the cytoplasm. The enzyme catalyses tRNA(Phe) + L-phenylalanine + ATP = L-phenylalanyl-tRNA(Phe) + AMP + diphosphate + H(+). In Saccharolobus islandicus (strain M.14.25 / Kamchatka #1) (Sulfolobus islandicus), this protein is Phenylalanine--tRNA ligase beta subunit.